The primary structure comprises 154 residues: Myoglobin (154 aa).

The Globin domain occupies 2–148; sequence GLSDGEWQLV…FRNDMAAKYK (147 aa). Residue Ser-4 is modified to Phosphoserine. Position 65 (His-65) interacts with nitrite. His-65 serves as a coordination point for O2. Thr-68 is subject to Phosphothreonine. His-94 is a binding site for heme b.

Belongs to the globin family. As to quaternary structure, monomeric.

Its subcellular location is the cytoplasm. The protein resides in the sarcoplasm. The catalysed reaction is Fe(III)-heme b-[protein] + nitric oxide + H2O = Fe(II)-heme b-[protein] + nitrite + 2 H(+). It catalyses the reaction H2O2 + AH2 = A + 2 H2O. In terms of biological role, monomeric heme protein which primary function is to store oxygen and facilitate its diffusion within muscle tissues. Reversibly binds oxygen through a pentacoordinated heme iron and enables its timely and efficient release as needed during periods of heightened demand. Depending on the oxidative conditions of tissues and cells, and in addition to its ability to bind oxygen, it also has a nitrite reductase activity whereby it regulates the production of bioactive nitric oxide. Under stress conditions, like hypoxia and anoxia, it also protects cells against reactive oxygen species thanks to its pseudoperoxidase activity. The sequence is that of Myoglobin (MB) from Ochotona princeps (Southern American pika).